The following is a 510-amino-acid chain: MASSSTSFPLTTAPPQGVRFNRRKPRLTVWAKQTAFQLGKTKGDDDSEGKQKGKNPFQFDFGKLPDMKSLIPVVTNPSTGLVFGNNRKKDPGTIFVAGATGQAGIRIAQTLLQRGFSVRAGVPDLGAAQDLARVAATYKILSNDEVKRLNAVQSPFQDAESIAKAIGNATKVVVTVGATENGPDAQVSTSDALLVVQAAELAGVSHVAIVYDGTISGSTYNVLDGITSFFGNLFAKSQPLTISDLIEKVAQTDVAYTLIKTSLTEDFSPEKAYNVVVSAEGSNSGSGSSSSEAYKVPKLKIASLVADIFANTAVAENKVVEVSTDPSAPSRPVDELFSVIPEDGRRKVYADAIARERAEEEAKVAADKAREAAEAAKEFEKQMQKLSEKEAEAASLAEDAQQKADAVGVTVDGLFNKAKDISSGLSWNKLGSQFATAIQNASETPKVQVATVRGQAKARNLPPKKAVVKQRPSSPFASKPKEERPKKPEKEVRKVFGGLFKQETIYIDDD.

The span at 1–14 (MASSSTSFPLTTAP) shows a compositional bias: polar residues. The transit peptide at 1–19 (MASSSTSFPLTTAPPQGVR) directs the protein to the chloroplast. Disordered regions lie at residues 1–24 (MASSSTSFPLTTAPPQGVRFNRRK) and 38–58 (LGKTKGDDDSEGKQKGKNPFQ). The span at 41–51 (TKGDDDSEGKQ) shows a compositional bias: basic and acidic residues. Position 94-123 (94-123 (IFVAGATGQAGIRIAQTLLQRGFSVRAGVP)) interacts with NADP(+). Positions 354–403 (ARERAEEEAKVAADKAREAAEAAKEFEKQMQKLSEKEAEAASLAEDAQQK) form a coiled coil. Residue Ser-395 is modified to Phosphoserine. Thr-451 bears the Phosphothreonine; by STN7 mark. Residues 453–493 (RGQAKARNLPPKKAVVKQRPSSPFASKPKEERPKKPEKEVR) are disordered. The segment covering 479-493 (KPKEERPKKPEKEVR) has biased composition (basic and acidic residues).

This sequence belongs to the NAD(P)-dependent epimerase/dehydratase family. Component of the plastid transcriptionally active chromosome required for plastid gene expression. Interacts with DEGP1 under high light conditions and maybe its degradation target. Post-translationally, excluded from chloroplast nucleoid when phosphorylated on Thr-451 by STN7 that may regulate membrane-anchoring functions of the nucleoid.

It is found in the plastid. It localises to the chloroplast stroma. The protein resides in the chloroplast nucleoid. Its subcellular location is the chloroplast thylakoid membrane. Probably involved in the regulation of plastid gene expression. The protein is Protein PLASTID TRANSCRIPTIONALLY ACTIVE 16, chloroplastic of Arabidopsis thaliana (Mouse-ear cress).